A 104-amino-acid chain; its full sequence is MGTLDPSVCGGLPPEVCEQLMMDQQELIKIKLEKRKWGREVTIIEGLNLDNERLKKVAKQLKSKLATGGTVKNGRIELQGDHRDRVKKLLEEMGYPPENIVIVG.

The protein belongs to the SUI1 family.

The sequence is that of Protein translation factor SUI1 homolog from Ignicoccus hospitalis (strain KIN4/I / DSM 18386 / JCM 14125).